The primary structure comprises 281 residues: Bis(5'-nucleosyl)-tetraphosphatase, symmetrical (281 aa).

This sequence belongs to the Ap4A hydrolase family.

It catalyses the reaction P(1),P(4)-bis(5'-adenosyl) tetraphosphate + H2O = 2 ADP + 2 H(+). Its function is as follows. Hydrolyzes diadenosine 5',5'''-P1,P4-tetraphosphate to yield ADP. In Delftia acidovorans (strain DSM 14801 / SPH-1), this protein is Bis(5'-nucleosyl)-tetraphosphatase, symmetrical.